Here is a 332-residue protein sequence, read N- to C-terminus: Anthranilate phosphoribosyltransferase (332 aa).

Residues G79, 82 to 83 (GD), T87, 89 to 92 (NIST), 107 to 115 (KHGNRSVSS), and S119 contribute to the 5-phospho-alpha-D-ribose 1-diphosphate site. An anthranilate-binding site is contributed by G79. Residue S91 coordinates Mg(2+). N110 lines the anthranilate pocket. R165 serves as a coordination point for anthranilate. Residues D223 and E224 each coordinate Mg(2+).

This sequence belongs to the anthranilate phosphoribosyltransferase family. As to quaternary structure, homodimer. The cofactor is Mg(2+).

It carries out the reaction N-(5-phospho-beta-D-ribosyl)anthranilate + diphosphate = 5-phospho-alpha-D-ribose 1-diphosphate + anthranilate. It functions in the pathway amino-acid biosynthesis; L-tryptophan biosynthesis; L-tryptophan from chorismate: step 2/5. Catalyzes the transfer of the phosphoribosyl group of 5-phosphorylribose-1-pyrophosphate (PRPP) to anthranilate to yield N-(5'-phosphoribosyl)-anthranilate (PRA). This is Anthranilate phosphoribosyltransferase from Vibrio vulnificus (strain YJ016).